We begin with the raw amino-acid sequence, 393 residues long: Methylthioribose kinase (393 aa).

Residues Asn38, Lys53, and 107-109 each bind ATP; that span reads EDL. Asp225 lines the substrate pocket. 242–244 is a binding site for ATP; the sequence is DPE. Position 332 (Arg332) interacts with substrate.

This sequence belongs to the methylthioribose kinase family. Homodimer.

It carries out the reaction 5-(methylsulfanyl)-D-ribose + ATP = 5-(methylsulfanyl)-alpha-D-ribose 1-phosphate + ADP + H(+). Its pathway is amino-acid biosynthesis; L-methionine biosynthesis via salvage pathway; S-methyl-5-thio-alpha-D-ribose 1-phosphate from S-methyl-5'-thioadenosine (hydrolase route): step 2/2. In terms of biological role, catalyzes the phosphorylation of methylthioribose into methylthioribose-1-phosphate. This Bacillus cereus (strain G9842) protein is Methylthioribose kinase.